The primary structure comprises 123 residues: Small ribosomal subunit protein uS12 (123 aa).

A 3-methylthioaspartic acid modification is found at aspartate 89.

Belongs to the universal ribosomal protein uS12 family. Part of the 30S ribosomal subunit. Contacts proteins S8 and S17. May interact with IF1 in the 30S initiation complex.

Its function is as follows. With S4 and S5 plays an important role in translational accuracy. Functionally, interacts with and stabilizes bases of the 16S rRNA that are involved in tRNA selection in the A site and with the mRNA backbone. Located at the interface of the 30S and 50S subunits, it traverses the body of the 30S subunit contacting proteins on the other side and probably holding the rRNA structure together. The combined cluster of proteins S8, S12 and S17 appears to hold together the shoulder and platform of the 30S subunit. This chain is Small ribosomal subunit protein uS12, found in Pelagibacter ubique (strain HTCC1062).